The following is a 140-amino-acid chain: Phosphatidylinositol N-acetylglucosaminyltransferase subunit GPI19 (140 aa).

The Cytoplasmic segment spans residues 1–12; the sequence is MYTKEYYWFSQY. Residues 13 to 33 form a helical membrane-spanning segment; sequence MIITSTLVLTIIWSILPSSLG. At 34–52 the chain is on the lumenal side; it reads EAAPKQFINTLLDIFPQRR. The chain crosses the membrane as a helical span at residues 53 to 73; the sequence is WIITLESIMLMGMLCTYIGLL. The Cytoplasmic portion of the chain corresponds to 74–140; the sequence is MYNEDTLTPP…YLYDNDHTST (67 aa).

The protein belongs to the GPI19 family. As to quaternary structure, component of the phosphatidylinositol N-acetylglucosaminyltransferase (GPI-GlcNAc transferase) complex composed of at least GPI1, GPI2, GPI3, GPI15, GPI19 and ERI1. Interacts with GPI2.

It localises to the endoplasmic reticulum membrane. It catalyses the reaction a 1,2-diacyl-sn-glycero-3-phospho-(1D-myo-inositol) + UDP-N-acetyl-alpha-D-glucosamine = a 6-(N-acetyl-alpha-D-glucosaminyl)-1-(1,2-diacyl-sn-glycero-3-phospho)-1D-myo-inositol + UDP + H(+). Its pathway is glycolipid biosynthesis; glycosylphosphatidylinositol-anchor biosynthesis. Its function is as follows. Part of the complex catalyzing the transfer of N-acetylglucosamine from UDP-N-acetylglucosamine to phosphatidylinositol, the first step of GPI biosynthesis. Involved in cell wall biosynthesis. This Saccharomyces cerevisiae (strain ATCC 204508 / S288c) (Baker's yeast) protein is Phosphatidylinositol N-acetylglucosaminyltransferase subunit GPI19 (GPI19).